We begin with the raw amino-acid sequence, 194 residues long: MIIVGLTGSIGMGKSTAAGMFRELGVPVNDADEVVHMLYSGEAVAPVEAAFPGVAKGGVIDRAELSLRLVAAPERLAELERIVHPLVRAKEQEFVARHRADGAPFVLLDIPLLFETKAEARLDRIVVVTCDPEMQRERVMKRPGMTAEKFAMILKRQVPDSEKRARADYIVDTSDSFDVTRQQIRAIVDDLRAG.

Residues 3–194 (IVGLTGSIGM…RAIVDDLRAG (192 aa)) enclose the DPCK domain. Residue 11-16 (GMGKST) participates in ATP binding.

It belongs to the CoaE family.

It localises to the cytoplasm. It catalyses the reaction 3'-dephospho-CoA + ATP = ADP + CoA + H(+). The protein operates within cofactor biosynthesis; coenzyme A biosynthesis; CoA from (R)-pantothenate: step 5/5. In terms of biological role, catalyzes the phosphorylation of the 3'-hydroxyl group of dephosphocoenzyme A to form coenzyme A. The protein is Dephospho-CoA kinase of Rhizobium meliloti (strain 1021) (Ensifer meliloti).